Consider the following 494-residue polypeptide: Sucrose-6-phosphate hydrolase (494 aa).

Residues 45-48 (LLND), Gln-64, 107-108 (YS), 168-169 (RD), and Glu-223 contribute to the substrate site. Asp-48 is a catalytic residue.

This sequence belongs to the glycosyl hydrolase 32 family.

It catalyses the reaction Hydrolysis of terminal non-reducing beta-D-fructofuranoside residues in beta-D-fructofuranosides.. Its pathway is glycan biosynthesis; sucrose metabolism. In Staphylococcus xylosus, this protein is Sucrose-6-phosphate hydrolase (scrB).